Reading from the N-terminus, the 329-residue chain is Beta-ketoacyl-[acyl-carrier-protein] synthase III (329 aa).

Residues C113 and H255 contribute to the active site. Residues 256–260 (QANQR) form an ACP-binding region. N285 is an active-site residue.

Belongs to the thiolase-like superfamily. FabH family. Homodimer.

It is found in the cytoplasm. It carries out the reaction malonyl-[ACP] + acetyl-CoA + H(+) = 3-oxobutanoyl-[ACP] + CO2 + CoA. Its pathway is lipid metabolism; fatty acid biosynthesis. Its function is as follows. Catalyzes the condensation reaction of fatty acid synthesis by the addition to an acyl acceptor of two carbons from malonyl-ACP. Catalyzes the first condensation reaction which initiates fatty acid synthesis and may therefore play a role in governing the total rate of fatty acid production. Possesses both acetoacetyl-ACP synthase and acetyl transacylase activities. Its substrate specificity determines the biosynthesis of branched-chain and/or straight-chain of fatty acids. In Chlorobium phaeobacteroides (strain DSM 266 / SMG 266 / 2430), this protein is Beta-ketoacyl-[acyl-carrier-protein] synthase III.